Here is a 303-residue protein sequence, read N- to C-terminus: Probable 5-dehydro-4-deoxyglucarate dehydratase (303 aa).

It belongs to the DapA family.

It carries out the reaction 5-dehydro-4-deoxy-D-glucarate + H(+) = 2,5-dioxopentanoate + CO2 + H2O. It functions in the pathway carbohydrate acid metabolism; D-glucarate degradation; 2,5-dioxopentanoate from D-glucarate: step 2/2. The polypeptide is Probable 5-dehydro-4-deoxyglucarate dehydratase (Pseudomonas putida (strain ATCC 700007 / DSM 6899 / JCM 31910 / BCRC 17059 / LMG 24140 / F1)).